Here is a 165-residue protein sequence, read N- to C-terminus: Nucleotide-binding protein P9215_05621 (165 aa).

It belongs to the YajQ family.

Functionally, nucleotide-binding protein. This chain is Nucleotide-binding protein P9215_05621, found in Prochlorococcus marinus (strain MIT 9215).